Here is a 299-residue protein sequence, read N- to C-terminus: Taste receptor type 2 member 16 (299 aa).

Topologically, residues 1–5 are extracellular; the sequence is MVPTQ. The chain crosses the membrane as a helical span at residues 6–26; sequence VTIFSIIMYVLESLVIIVQSC. At 27–47 the chain is on the cytoplasmic side; the sequence is TTVAVLFREWMHFQRLSPVET. Residues 48–68 form a helical membrane-spanning segment; the sequence is ILISLGISHFCLQWTSMLYNF. The Extracellular portion of the chain corresponds to 69–82; the sequence is GTYSRPVLLFWKVS. A helical membrane pass occupies residues 83 to 103; that stretch reads VVWEFMNILTFWLTSWLAVLY. Over 104–125 the chain is Cytoplasmic; sequence CVKVSSFTHPIFLWLRMKILKL. The helical transmembrane segment at 126–146 threads the bilayer; the sequence is VLWLILGALIASCLSIIPSVV. Over 147-183 the chain is Extracellular; that stretch reads KYHIQMELVTLDNLPKNNSLILRLQQFEWYFSNPLKM. The N-linked (GlcNAc...) asparagine glycan is linked to Asn-163. A helical transmembrane segment spans residues 184–204; it reads IGFGIPFFVFLASIILLTVSL. Over 205–233 the chain is Cytoplasmic; that stretch reads VQHWVQMKHYSSSNSSLKAQFTVLKSLAT. A helical transmembrane segment spans residues 234–254; sequence FFTFFTSYFLTIVISFIGTVF. Topologically, residues 255 to 258 are extracellular; it reads DKKS. Residues 259-279 traverse the membrane as a helical segment; sequence WFWVCEAVIYGLVCIHFTSLM. At 280-299 the chain is on the cytoplasmic side; the sequence is MSNPALKKALKLQFWSPEPS.

Belongs to the G-protein coupled receptor T2R family. As to quaternary structure, interacts with RTP3 and RTP4.

It is found in the cell membrane. Functionally, gustducin-coupled receptor implicated in the perception of bitter compounds in the oral cavity and the gastrointestinal tract. Signals through PLCB2 and the calcium-regulated cation channel TRPM5. The chain is Taste receptor type 2 member 16 (Tas2r16) from Mus musculus (Mouse).